Here is a 208-residue protein sequence, read N- to C-terminus: ATP-dependent Clp protease proteolytic subunit (208 aa).

S105 serves as the catalytic Nucleophile. H130 is a catalytic residue.

It belongs to the peptidase S14 family. In terms of assembly, fourteen ClpP subunits assemble into 2 heptameric rings which stack back to back to give a disk-like structure with a central cavity, resembling the structure of eukaryotic proteasomes.

The protein resides in the cytoplasm. It catalyses the reaction Hydrolysis of proteins to small peptides in the presence of ATP and magnesium. alpha-casein is the usual test substrate. In the absence of ATP, only oligopeptides shorter than five residues are hydrolyzed (such as succinyl-Leu-Tyr-|-NHMec, and Leu-Tyr-Leu-|-Tyr-Trp, in which cleavage of the -Tyr-|-Leu- and -Tyr-|-Trp bonds also occurs).. Functionally, cleaves peptides in various proteins in a process that requires ATP hydrolysis. Has a chymotrypsin-like activity. Plays a major role in the degradation of misfolded proteins. The sequence is that of ATP-dependent Clp protease proteolytic subunit from Xylella fastidiosa (strain 9a5c).